The sequence spans 214 residues: MQNYKQEFIKFALSRNVLRFGEFTLKSGRVSPYFFNAGLFNTGADLARLGEFYASAIQASGLNYDVIFGPAYKGIPIGTTVSVALFNKFNLDKPVCFNRKEAKDHGEGGNLIGSPLQGRILLVDDVITAGTAIREAMDIIAANNARLAAVVIALNRKERGKGELSAIQEVERDYRCDVLSIIDLDDLMQFIENEPEYSQYLPAMKAYREQYGVA.

Residue Lys-26 coordinates 5-phospho-alpha-D-ribose 1-diphosphate. Orotate is bound at residue Phe-34–Phe-35. Residues Tyr-72 to Lys-73, Arg-99, Lys-100, Lys-103, His-105, and Asp-124 to Ala-132 each bind 5-phospho-alpha-D-ribose 1-diphosphate. Residues Thr-128 and Arg-156 each contribute to the orotate site.

The protein belongs to the purine/pyrimidine phosphoribosyltransferase family. PyrE subfamily. Homodimer. It depends on Mg(2+) as a cofactor.

It carries out the reaction orotidine 5'-phosphate + diphosphate = orotate + 5-phospho-alpha-D-ribose 1-diphosphate. It participates in pyrimidine metabolism; UMP biosynthesis via de novo pathway; UMP from orotate: step 1/2. Functionally, catalyzes the transfer of a ribosyl phosphate group from 5-phosphoribose 1-diphosphate to orotate, leading to the formation of orotidine monophosphate (OMP). The polypeptide is Orotate phosphoribosyltransferase (Mannheimia succiniciproducens (strain KCTC 0769BP / MBEL55E)).